Reading from the N-terminus, the 467-residue chain is MATEYALRMGDGKRIYLTKEKILSEIEAGSSNAADLGDIPDLSTDEMKKLAEILMMPGKAVSVEQGMEVPVTHDIGTIRLDGDQGNSGVGIPSSRLVGCMTHERAFGADTMELGHIDYSFKPVKPVVSNECQAMEVCQQNMIIPLFYGAMPNMGLYYTPDGPFENPGDLMKMFKIDKARESMEHAADHLTRDTVWVMQKLFASGADGVNFDTTAAAGDADMYGTLRAVEVLRAQFPEMYIEVGMAGEMVLGMHGELEYDEVRLAGLWPHEQAPLIAKAGANVFGPVVNTNTSKTSAWNLARAVTFIKEAVKASPIPCHVNMGMGVGGIPMLETPPVDAVTRASKAMVEVAGVDGIOIGVGDPLGMPISHIMASGMTGIRAAGDLVARMEFSKNMRIGEAKEYVAKKLNVDTMDLADEHVMRELREELDIGVITSVPGAAKGIAAKMNIEKLLGIKINSCETFRAQLA.

Pyrrolysine 356 is a non-standard amino acid (pyrrolysine).

This sequence belongs to the dimethylamine methyltransferase family.

It catalyses the reaction Co(I)-[dimethylamine-specific corrinoid protein] + dimethylamine + H(+) = methyl-Co(III)-[dimethylamine-specific corrinoid protein] + methylamine. It functions in the pathway one-carbon metabolism; methanogenesis from dimethylamine. Functionally, catalyzes the transfer of a methyl group from dimethylamine to the corrinoid cofactor of MtbC. The protein is Dimethylamine methyltransferase MtbB3 (mtbB3) of Methanosarcina acetivorans (strain ATCC 35395 / DSM 2834 / JCM 12185 / C2A).